Here is a 399-residue protein sequence, read N- to C-terminus: Zinc finger HIT domain-containing protein 2 (399 aa).

Methionine 1 carries the post-translational modification N-acetylmethionine. The Zn(2+) site is built by cysteine 7, cysteine 10, cysteine 22, cysteine 25, cysteine 30, cysteine 34, histidine 38, and cysteine 41. The HIT-type zinc finger occupies 7–41 (CGFCPTGEAQPARYTCPRCNVPYCSLRCYRAHGSC). 2 disordered regions span residues 71 to 97 (LRQQRETEDEPGDAGLRPGPAPGGLSG) and 141 to 166 (EELGDAPSGDAEELEPSPARMPPEPV).

As to quaternary structure, interacts (via HIT-type zinc finger) with RUVBL2 in the presence of ATP or ADP; shows a stronger interaction in the presence of ADP.

Functionally, may act as a bridging factor mediating the interaction between the R2TP/Prefoldin-like (R2TP/PFDL) complex and U5 small nuclear ribonucleoprotein (U5 snRNP). Required for the interaction of R2TP complex subunit RPAP3 and prefoldin-like subunit URI1 with U5 snRNP proteins EFTUD2 and PRPF8. May play a role in regulating the composition of the U5 snRNP complex. The protein is Zinc finger HIT domain-containing protein 2 (ZNHIT2) of Bos taurus (Bovine).